The sequence spans 1236 residues: DNA-directed RNA polymerase subunit beta (1236 aa).

The segment at 1185-1236 (IEGSEDYTEPKQPNDNYLEEEENKDKESDYDEDLNFDDLTKGLQLDDFNDEH) is disordered. Residues 1201 to 1220 (YLEEEENKDKESDYDEDLNF) are compositionally biased toward acidic residues.

It belongs to the RNA polymerase beta chain family. In terms of assembly, the RNAP catalytic core consists of 2 alpha, 1 beta, 1 beta' and 1 omega subunit. When a sigma factor is associated with the core the holoenzyme is formed, which can initiate transcription.

The enzyme catalyses RNA(n) + a ribonucleoside 5'-triphosphate = RNA(n+1) + diphosphate. Functionally, DNA-dependent RNA polymerase catalyzes the transcription of DNA into RNA using the four ribonucleoside triphosphates as substrates. This is DNA-directed RNA polymerase subunit beta from Clostridium tetani (strain Massachusetts / E88).